The following is a 435-amino-acid chain: Xylose isomerase (435 aa).

Catalysis depends on residues His100 and Asp103. 7 residues coordinate Mg(2+): Glu231, Glu267, His270, Asp295, Asp306, Asp308, and Asp338.

The protein belongs to the xylose isomerase family. As to quaternary structure, homotetramer. Requires Mg(2+) as cofactor.

It is found in the cytoplasm. It catalyses the reaction alpha-D-xylose = alpha-D-xylulofuranose. In Brucella ovis (strain ATCC 25840 / 63/290 / NCTC 10512), this protein is Xylose isomerase.